A 159-amino-acid chain; its full sequence is Endoribonuclease YbeY (159 aa).

Residues histidine 122, histidine 126, and histidine 132 each contribute to the Zn(2+) site.

This sequence belongs to the endoribonuclease YbeY family. The cofactor is Zn(2+).

The protein resides in the cytoplasm. Functionally, single strand-specific metallo-endoribonuclease involved in late-stage 70S ribosome quality control and in maturation of the 3' terminus of the 16S rRNA. The protein is Endoribonuclease YbeY of Roseiflexus castenholzii (strain DSM 13941 / HLO8).